A 1154-amino-acid chain; its full sequence is Polyketide biosynthesis protein ThaF (1154 aa).

Residues 330 to 714 (MHAFLFPGQG…TNGIAPAARV (385 aa)) are acyl transferase. The segment at 627 to 689 (SAVAASAPPR…PAPAPAPAPA (63 aa)) is disordered. Positions 641–672 (ADAQPPAASPARAATAASTMPPASASASASAP) are enriched in low complexity. The segment covering 673 to 689 (APAPAPAPAPAPAPAPA) has biased composition (pro residues).

The protein in the N-terminal section; belongs to the FabD family.

The protein resides in the cytoplasm. The enzyme catalyses holo-[ACP] + malonyl-CoA = malonyl-[ACP] + CoA. It functions in the pathway antibiotic biosynthesis. Involved in production of the polyketide antibiotic thailandamide. Probably has an acyl transferase activity and could also have a flavin mononucleotide-dependent oxidoreductase activity. The chain is Polyketide biosynthesis protein ThaF from Burkholderia thailandensis (strain ATCC 700388 / DSM 13276 / CCUG 48851 / CIP 106301 / E264).